The following is a 134-amino-acid chain: D-ribose pyranase (134 aa).

His-20 functions as the Proton donor in the catalytic mechanism. Substrate-binding positions include Asp-28, His-99, and 123–125 (FSN).

The protein belongs to the RbsD / FucU family. RbsD subfamily. Homodecamer.

The protein resides in the cytoplasm. It carries out the reaction beta-D-ribopyranose = beta-D-ribofuranose. It participates in carbohydrate metabolism; D-ribose degradation; D-ribose 5-phosphate from beta-D-ribopyranose: step 1/2. Catalyzes the interconversion of beta-pyran and beta-furan forms of D-ribose. The protein is D-ribose pyranase of Staphylococcus epidermidis (strain ATCC 12228 / FDA PCI 1200).